Consider the following 389-residue polypeptide: Choline/ethanolaminephosphotransferase 2 (389 aa).

The next 8 helical transmembrane spans lie at methionine 49–serine 69, threonine 141–phenylalanine 161, glycine 176–alanine 196, isoleucine 220–asparagine 240, methionine 252–tryptophan 272, histidine 286–alanine 306, methionine 321–leucine 338, and valine 350–isoleucine 370.

This sequence belongs to the CDP-alcohol phosphatidyltransferase class-I family. It depends on Mg(2+) as a cofactor. Requires Mn(2+) as cofactor.

It is found in the membrane. The enzyme catalyses CDP-ethanolamine + a 1,2-diacyl-sn-glycerol = a 1,2-diacyl-sn-glycero-3-phosphoethanolamine + CMP + H(+). It catalyses the reaction CDP-choline + a 1,2-diacyl-sn-glycerol = a 1,2-diacyl-sn-glycero-3-phosphocholine + CMP + H(+). It participates in phospholipid metabolism; phosphatidylethanolamine biosynthesis; phosphatidylethanolamine from ethanolamine: step 3/3. The protein operates within phospholipid metabolism; phosphatidylcholine biosynthesis; phosphatidylcholine from phosphocholine: step 2/2. Catalyzes both phosphatidylcholine and phosphatidylethanolamine biosynthesis from CDP-choline and CDP-ethanolamine, respectively. Has a higher cholinephosphotransferase activity than ethanolaminephosphotransferase activity. In Arabidopsis thaliana (Mouse-ear cress), this protein is Choline/ethanolaminephosphotransferase 2 (AAPT2).